Here is a 299-residue protein sequence, read N- to C-terminus: ClpXP adapter protein SpxH (299 aa).

This sequence belongs to the SpxH family. Interacts with Spx. Interacts with SpxO/YuzO.

It is found in the cytoplasm. Its activity is regulated as follows. Irreversible aggregation upon several stress conditions prevents interaction with Spx and therefore leads to Spx stabilization. Inhibited by interaction with SpxO/YuzO. Adapter protein required for efficient degradation of Spx by ClpXP under non-stress conditions. Interaction with Spx stabilizes Spx and exposes the C-terminus of Spx for recognition and proteolysis by ClpXP. Is specific for Spx and does not enhance proteolysis by ClpCP protease. Probably binds 2 zinc ions. In Bacillus subtilis (strain 168), this protein is ClpXP adapter protein SpxH.